The chain runs to 873 residues: Serine/threonine-protein phosphatase 4 regulatory subunit 4 (873 aa).

HEAT repeat units lie at residues 213–251, 252–290, and 392–427; these read ILPL…TKSV, VLPE…RSQT, and NFHM…SKLL. Positions 686–720 form a coiled coil; it reads QKKFYEKDLLDQEKEREELLLLEMEQLEKEKQQND. Residues 713-737 show a composition bias toward basic and acidic residues; the sequence is EKEKQQNDGRPMSDKMFEKKRRDTK. Residues 713–766 are disordered; the sequence is EKEKQQNDGRPMSDKMFEKKRRDTKTPTQSLPKNIPISVPGPSSVTPSTSKEIK. Low complexity predominate over residues 747–762; the sequence is IPISVPGPSSVTPSTS. S775 carries the post-translational modification Phosphoserine. A Phosphothreonine modification is found at T797. Over residues 822–858 the composition is skewed to polar residues; it reads TRNASSVPSSFSPNTPLPSTSRGTGNSVDPKSSGSKD. Residues 822-873 form a disordered region; it reads TRNASSVPSSFSPNTPLPSTSRGTGNSVDPKSSGSKDTQPRKATLKSRKSNP. Positions 864–873 are enriched in basic residues; it reads ATLKSRKSNP.

As to quaternary structure, serine/threonine-protein phosphatase 4 (PP4) occurs in different assemblies of the catalytic and one or more regulatory subunits. Component of the PP4 complex PPP4C-PPP4R4.

It localises to the cytoplasm. In terms of biological role, putative regulatory subunit of serine/threonine-protein phosphatase 4. In Homo sapiens (Human), this protein is Serine/threonine-protein phosphatase 4 regulatory subunit 4 (PPP4R4).